Here is a 277-residue protein sequence, read N- to C-terminus: Probable endonuclease 4 (277 aa).

Zn(2+) contacts are provided by histidine 69, histidine 109, glutamate 145, aspartate 179, histidine 182, histidine 214, aspartate 227, histidine 229, and glutamate 259.

The protein belongs to the AP endonuclease 2 family. The cofactor is Zn(2+).

The catalysed reaction is Endonucleolytic cleavage to 5'-phosphooligonucleotide end-products.. Endonuclease IV plays a role in DNA repair. It cleaves phosphodiester bonds at apurinic or apyrimidinic (AP) sites, generating a 3'-hydroxyl group and a 5'-terminal sugar phosphate. This Bacteroides thetaiotaomicron (strain ATCC 29148 / DSM 2079 / JCM 5827 / CCUG 10774 / NCTC 10582 / VPI-5482 / E50) protein is Probable endonuclease 4.